The primary structure comprises 291 residues: Pre-mRNA-splicing factor SPP381 (291 aa).

2 disordered regions span residues 1-99 (MSFR…PLPR) and 239-266 (EKEK…YKIT). Polar residues-rich tracts occupy residues 28–41 (QNVS…SLSH) and 52–62 (TGKNRTPNDGQ). Acidic residues predominate over residues 63 to 91 (ESNESDGSPESDESPESEESSDNSDSSDS). Positions 239–258 (EKEKLDHKKQRSAEKVEKSH) are enriched in basic and acidic residues.

This sequence belongs to the SPP381 family. Component of the U4/U6-U5 tri-snRNP complex composed of the U4, U6 and U5 snRNAs and at least PRP3, PRP4, PRP6, PRP8, PRP18, PRP31, PRP38, SNU13, SNU23, SNU66, SNU114, SPP381, SMB1, SMD1, SMD2, SMD3, SMX2, SMX3, LSM2, LSM3, LSM4, LSM5, LSM6, LSM7, LSM8, BRR2 and DIB1. Interacts with PRP38.

The protein resides in the nucleus. Component of the spliceosome and rRNA processing machinery. In association with the spliceosomal U4/U6.U5 tri-snRNP particle, required for splicing of pre-mRNA. This Saccharomyces cerevisiae (strain ATCC 204508 / S288c) (Baker's yeast) protein is Pre-mRNA-splicing factor SPP381 (SPP381).